A 436-amino-acid polypeptide reads, in one-letter code: Glutamate-1-semialdehyde 2,1-aminomutase 2 (436 aa).

Position 271 is an N6-(pyridoxal phosphate)lysine (Lys271).

It belongs to the class-III pyridoxal-phosphate-dependent aminotransferase family. HemL subfamily. Homodimer. Pyridoxal 5'-phosphate is required as a cofactor.

It localises to the cytoplasm. The catalysed reaction is (S)-4-amino-5-oxopentanoate = 5-aminolevulinate. It functions in the pathway porphyrin-containing compound metabolism; protoporphyrin-IX biosynthesis; 5-aminolevulinate from L-glutamyl-tRNA(Glu): step 2/2. In Exiguobacterium sibiricum (strain DSM 17290 / CCUG 55495 / CIP 109462 / JCM 13490 / 255-15), this protein is Glutamate-1-semialdehyde 2,1-aminomutase 2.